Here is a 207-residue protein sequence, read N- to C-terminus: Uracil phosphoribosyltransferase (207 aa).

Residues Arg77, Arg102, and 129–137 (DPMLATGGS) each bind 5-phospho-alpha-D-ribose 1-diphosphate. Uracil is bound by residues Ile192 and 197–199 (GDA). Position 198 (Asp198) interacts with 5-phospho-alpha-D-ribose 1-diphosphate.

It belongs to the UPRTase family. Mg(2+) serves as cofactor.

The catalysed reaction is UMP + diphosphate = 5-phospho-alpha-D-ribose 1-diphosphate + uracil. It functions in the pathway pyrimidine metabolism; UMP biosynthesis via salvage pathway; UMP from uracil: step 1/1. With respect to regulation, allosterically activated by GTP. In terms of biological role, catalyzes the conversion of uracil and 5-phospho-alpha-D-ribose 1-diphosphate (PRPP) to UMP and diphosphate. This Dictyoglomus thermophilum (strain ATCC 35947 / DSM 3960 / H-6-12) protein is Uracil phosphoribosyltransferase.